The chain runs to 352 residues: Transcription factor BHLH156 (352 aa).

Residues 59-141 (GGDDDDNGGV…RSKTIVSERK (83 aa)) form a disordered region. The tract at residues 130–143 (RDRSKTIVSERKRR) is basic motif. The bHLH domain occupies 130–179 (RDRSKTIVSERKRRVRMKEKLYELRALVPNITKMDKASIIADAVVYVKDL). The interval 144–179 (VRMKEKLYELRALVPNITKMDKASIIADAVVYVKDL) is helix-loop-helix motif. The segment at 194-216 (EEARPIRPPPPSAAAQRPQRQPR) is disordered. Residues 206–216 (AAAQRPQRQPR) are compositionally biased toward low complexity.

Belongs to the bHLH protein family. As to quaternary structure, forms homodimers. Interacts with IRO2 in the nucleus. In terms of tissue distribution, expressed in the meristematic zone of lateral and primary roots.

It is found in the nucleus. In terms of biological role, transcription factor involved in positive regulation of genes involved in strategy II iron acquisition, including genes for mugineic acid (MA) family phytosiderophores biosynthesis, and genes involved in S-adenosylmethionine cycle and iron transport. May play a role in the regulation of iron deficiency response by promoting the nuclear localization of IRO2. Possesses transactivation activity in yeast. The protein is Transcription factor BHLH156 of Oryza sativa subsp. japonica (Rice).